The primary structure comprises 411 residues: Glutamate dehydrogenase 2 (411 aa).

The active site involves Lys102.

Belongs to the Glu/Leu/Phe/Val dehydrogenases family.

It is found in the mitochondrion. It catalyses the reaction L-glutamate + NAD(+) + H2O = 2-oxoglutarate + NH4(+) + NADH + H(+). The enzyme catalyses L-glutamate + NADP(+) + H2O = 2-oxoglutarate + NH4(+) + NADPH + H(+). The protein is Glutamate dehydrogenase 2 (GDH2) of Arabidopsis thaliana (Mouse-ear cress).